The sequence spans 541 residues: Serine/threonine-protein kinase akt-1 (541 aa).

A PH domain is found at 15-118; it reads DVVIEGWLHK…WIHAIESISK (104 aa). The 258-residue stretch at 193–450 folds into the Protein kinase domain; that stretch reads FDFLKVLGKG…ALEICRADFF (258 aa). Residues 199–207 and Lys222 contribute to the ATP site; that span reads LGKGTFGKV. Asp316 functions as the Proton acceptor in the catalytic mechanism. Thr350 is modified (phosphothreonine). One can recognise an AGC-kinase C-terminal domain in the interval 451–528; the sequence is RTVDWEATYR…HNVMGSINRI (78 aa). Ser517 bears the Phosphoserine mark.

Belongs to the protein kinase superfamily. AGC Ser/Thr protein kinase family. RAC subfamily. As to quaternary structure, interacts with pdk-1, sgk-1, akt-2 and daf-16. Part of a complex containing sgk-1, akt-1 and akt-2. Interacts with cmd-1 in the presence of Ca(2+). Interacts with let-92 phosphatase regulatory subunit pptr-1. Requires Mg(2+) as cofactor. In terms of tissue distribution, expressed in neurons, muscle cells of the pharynx, rectal gland cells, vulva and spermatheca.

It catalyses the reaction L-seryl-[protein] + ATP = O-phospho-L-seryl-[protein] + ADP + H(+). The enzyme catalyses L-threonyl-[protein] + ATP = O-phospho-L-threonyl-[protein] + ADP + H(+). With respect to regulation, phosphorylated and activated by pdk-1. In terms of biological role, acts downstream of PI3 kinase age-1 and kinase pdk-1 in the daf-2/insulin receptor-like transduction pathway. Phosphorylates Forkhead-related daf-16 and the longevity-promoting skn-1 transcription factors, which inhibits their entry into the nucleus and antagonizes their functions. Plays a role in maintaining the gonadal basement membrane through it's role in inhibiting daf-16 activity. Has an essential role in regulating developmental arrest at the dauer stage. Plays a role in immune function and pathogen resistance. Regulates salt chemotaxis learning. Downstream of age-1 and together with akt-2 and sgk-1, promotes cell survival during embryonic development. The sequence is that of Serine/threonine-protein kinase akt-1 from Caenorhabditis elegans.